Consider the following 350-residue polypeptide: Protein-glutamate methylesterase/protein-glutamine glutaminase (350 aa).

The Response regulatory domain occupies 5–122 (TVLCVDDSAL…REGMLAYSEL (118 aa)). Position 56 is a 4-aspartylphosphate (aspartate 56). The CheB-type methylesterase domain occupies 153–345 (LLSSEKLIAV…KRMLAKISSG (193 aa)). Catalysis depends on residues serine 165, histidine 191, and aspartate 287.

The protein belongs to the CheB family. In terms of processing, phosphorylated by CheA. Phosphorylation of the N-terminal regulatory domain activates the methylesterase activity.

It localises to the cytoplasm. The catalysed reaction is [protein]-L-glutamate 5-O-methyl ester + H2O = L-glutamyl-[protein] + methanol + H(+). It catalyses the reaction L-glutaminyl-[protein] + H2O = L-glutamyl-[protein] + NH4(+). Involved in chemotaxis. Part of a chemotaxis signal transduction system that modulates chemotaxis in response to various stimuli. Catalyzes the demethylation of specific methylglutamate residues introduced into the chemoreceptors (methyl-accepting chemotaxis proteins or MCP) by CheR. Also mediates the irreversible deamidation of specific glutamine residues to glutamic acid. The sequence is that of Protein-glutamate methylesterase/protein-glutamine glutaminase from Photorhabdus laumondii subsp. laumondii (strain DSM 15139 / CIP 105565 / TT01) (Photorhabdus luminescens subsp. laumondii).